We begin with the raw amino-acid sequence, 99 residues long: Putative protein adenylyltransferase MJ0141 (99 aa).

Residues 29–43 (GSYARGDYDEESDVD) carry the GSX(10)DXD motif motif. Asp41 and Asp43 together coordinate Mg(2+).

Belongs to the MntA antitoxin family. Requires Mg(2+) as cofactor.

It carries out the reaction L-tyrosyl-[protein] + ATP = O-(5'-adenylyl)-L-tyrosyl-[protein] + diphosphate. It catalyses the reaction O-(5'-adenylyl)-L-tyrosyl-[protein] + ATP = O-[5'-(adenylyl-(5'-&gt;3')-adenylyl)]-L-tyrosyl-[protein] + diphosphate. Its function is as follows. Putative antitoxin component of a putative type VII toxin-antitoxin (TA) system. Its cognate toxin might be MF0142, which it might AMPylate. The sequence is that of Putative protein adenylyltransferase MJ0141 from Methanocaldococcus jannaschii (strain ATCC 43067 / DSM 2661 / JAL-1 / JCM 10045 / NBRC 100440) (Methanococcus jannaschii).